Reading from the N-terminus, the 392-residue chain is NDP-glycosyltransferase YjiC (392 aa).

UDP-binding positions include Asn-18, Thr-229, Ser-255, Val-278, His-293, and 297 to 301 (NSTME).

The protein belongs to the UDP-glycosyltransferase family. Monomer.

It carries out the reaction an NDP-glycose + an acceptor = a glycosylated acceptor + NDP.. Activity is improved in the presence of Mn(2+), Mg(2+) and Ca(2+), and inhibited by Ni(2+), Zn(2+) and Cu(2+). Functionally, glycosyltransferase that can glycosylate a wide range of substrates, including various flavonoids, phenyl ketones, curcuminoid, lignins, zingerone, triterpenes, stilbene and anthraquinone, using UDP-glucose or ADP-glucose as sugar donor. It also exhibits O-, N- and S-glycosylation activities towards simple aromatics. In vivo, the broad acceptor tolerance of YjiC might function as a detoxification agent against exogenous xenobiotics to make the strain adaptable to the changeable environment. The sequence is that of NDP-glycosyltransferase YjiC (yjiC) from Bacillus subtilis (strain 168).